Consider the following 71-residue polypeptide: UPF0435 protein BPUM_0734 (71 aa).

This sequence belongs to the UPF0435 family.

This is UPF0435 protein BPUM_0734 from Bacillus pumilus (strain SAFR-032).